Here is a 690-residue protein sequence, read N- to C-terminus: Eukaryotic translation initiation factor 3 subunit B (690 aa).

Over residues 1–11 (MAKKKSEDHSG) the composition is skewed to basic and acidic residues. The disordered stretch occupies residues 1 to 33 (MAKKKSEDHSGADANDSDYNEEPNFDDPPNFVD). Residues 15 to 25 (NDSDYNEEPNF) show a composition bias toward acidic residues. The 85-residue stretch at 57-141 (SVVVVDNMPK…YTFAVNLFTD (85 aa)) folds into the RRM domain. WD repeat units follow at residues 207-246 (TRER…KIQK), 292-331 (GDGM…LLDL), 334-369 (IKIP…TLMK), 442-484 (EIRE…KPSL), and 530-575 (PDHF…IKRT). The stretch at 613-646 (EQKDRLRLTRASKELLEKRAQLRETFMEYRNKRI) forms a coiled coil.

Belongs to the eIF-3 subunit B family. As to quaternary structure, component of the eukaryotic translation initiation factor 3 (eIF-3) complex. The eIF-3 complex interacts with pix. Interacts with mxt.

It is found in the cytoplasm. RNA-binding component of the eukaryotic translation initiation factor 3 (eIF-3) complex, which is involved in protein synthesis of a specialized repertoire of mRNAs and, together with other initiation factors, stimulates binding of mRNA and methionyl-tRNAi to the 40S ribosome. The eIF-3 complex specifically targets and initiates translation of a subset of mRNAs involved in cell proliferation. The protein is Eukaryotic translation initiation factor 3 subunit B of Drosophila grimshawi (Hawaiian fruit fly).